We begin with the raw amino-acid sequence, 169 residues long: Peptide deformylase 1 (169 aa).

Positions 93 and 135 each coordinate Fe cation. The active site involves Glu-136. His-139 lines the Fe cation pocket.

The protein belongs to the polypeptide deformylase family. It depends on Fe(2+) as a cofactor.

The enzyme catalyses N-terminal N-formyl-L-methionyl-[peptide] + H2O = N-terminal L-methionyl-[peptide] + formate. Its function is as follows. Removes the formyl group from the N-terminal Met of newly synthesized proteins. Requires at least a dipeptide for an efficient rate of reaction. N-terminal L-methionine is a prerequisite for activity but the enzyme has broad specificity at other positions. This is Peptide deformylase 1 from Corynebacterium glutamicum (strain ATCC 13032 / DSM 20300 / JCM 1318 / BCRC 11384 / CCUG 27702 / LMG 3730 / NBRC 12168 / NCIMB 10025 / NRRL B-2784 / 534).